Consider the following 141-residue polypeptide: Large ribosomal subunit protein uL11 (141 aa).

It belongs to the universal ribosomal protein uL11 family. Part of the ribosomal stalk of the 50S ribosomal subunit. Interacts with L10 and the large rRNA to form the base of the stalk. L10 forms an elongated spine to which L12 dimers bind in a sequential fashion forming a multimeric L10(L12)X complex. One or more lysine residues are methylated.

In terms of biological role, forms part of the ribosomal stalk which helps the ribosome interact with GTP-bound translation factors. This Synechococcus sp. (strain JA-3-3Ab) (Cyanobacteria bacterium Yellowstone A-Prime) protein is Large ribosomal subunit protein uL11.